Here is a 1368-residue protein sequence, read N- to C-terminus: Beclin-1-like protein A (1368 aa).

2 stretches are compositionally biased toward low complexity: residues 24 to 57 and 122 to 135; these read GSGS…NNGP and NSII…SPSN. Disordered regions lie at residues 24 to 64, 122 to 249, 331 to 431, 819 to 874, and 992 to 1048; these read GSGS…PSSE, NSII…SLMM, NKNN…STNS, TITP…NNNN, and IDGN…NDNN. Polar residues predominate over residues 136–147; that stretch reads AITRNNSFNMDP. Residues 148–167 are compositionally biased toward low complexity; the sequence is NNNNNNNNNNNNNNNNNNNN. The span at 168-177 shows a compositional bias: polar residues; it reads GEYMNSSIVF. Low complexity predominate over residues 179–246; it reads NNVNNNNNNP…INNSVNSVNS (68 aa). Low complexity-rich tracts occupy residues 992-1005 and 1015-1048; these read IDGN…NDNN and NNNN…NDNN. A coiled-coil region spans residues 1047-1150; sequence NNYNFENEIN…AIRDQLERVS (104 aa).

Belongs to the beclin family.

Its subcellular location is the endosome membrane. Involved in autophagy. May be required to recruit the atg8-phosphatidylinositol conjugate and the atg12-atg5 conjugate to the pre-autophagosomal structure. Required for normal survival when exposed to pathogenic bacteria S.typhimurium by promoting autophagic degradation of intracellular S.typhimurium. This is Beclin-1-like protein A (atg6A) from Dictyostelium discoideum (Social amoeba).